A 91-amino-acid chain; its full sequence is Putative ribonuclease inhibitor YrdF (91 aa).

Belongs to the barstar family.

The protein localises to the cytoplasm. This is Putative ribonuclease inhibitor YrdF (yrdF) from Bacillus subtilis (strain 168).